Here is a 146-residue protein sequence, read N- to C-terminus: Cyanate hydratase (146 aa).

Catalysis depends on residues arginine 87, glutamate 90, and serine 113.

This sequence belongs to the cyanase family.

It carries out the reaction cyanate + hydrogencarbonate + 3 H(+) = NH4(+) + 2 CO2. Functionally, catalyzes the reaction of cyanate with bicarbonate to produce ammonia and carbon dioxide. The chain is Cyanate hydratase from Trichormus variabilis (strain ATCC 29413 / PCC 7937) (Anabaena variabilis).